We begin with the raw amino-acid sequence, 239 residues long: Adapter protein MecA (239 aa).

Positions 118 to 128 are enriched in basic and acidic residues; that stretch reads EQRTKEKEAQG. Residues 118–137 form a disordered region; it reads EQRTKEKEAQGSKRQKSSAR.

It belongs to the MecA family. In terms of assembly, homodimer.

Functionally, enables the recognition and targeting of unfolded and aggregated proteins to the ClpC protease or to other proteins involved in proteolysis. The sequence is that of Adapter protein MecA from Staphylococcus aureus (strain COL).